We begin with the raw amino-acid sequence, 170 residues long: ATP synthase subunit b (170 aa).

The chain crosses the membrane as a helical span at residues 11–31 (GLNTGDIIFQLIAMLILLALL).

The protein belongs to the ATPase B chain family. As to quaternary structure, F-type ATPases have 2 components, F(1) - the catalytic core - and F(0) - the membrane proton channel. F(1) has five subunits: alpha(3), beta(3), gamma(1), delta(1), epsilon(1). F(0) has three main subunits: a(1), b(2) and c(10-14). The alpha and beta chains form an alternating ring which encloses part of the gamma chain. F(1) is attached to F(0) by a central stalk formed by the gamma and epsilon chains, while a peripheral stalk is formed by the delta and b chains.

It localises to the cell membrane. Its function is as follows. F(1)F(0) ATP synthase produces ATP from ADP in the presence of a proton or sodium gradient. F-type ATPases consist of two structural domains, F(1) containing the extramembraneous catalytic core and F(0) containing the membrane proton channel, linked together by a central stalk and a peripheral stalk. During catalysis, ATP synthesis in the catalytic domain of F(1) is coupled via a rotary mechanism of the central stalk subunits to proton translocation. Component of the F(0) channel, it forms part of the peripheral stalk, linking F(1) to F(0). This chain is ATP synthase subunit b, found in Bacillus pumilus (strain SAFR-032).